The following is a 314-amino-acid chain: Methionyl-tRNA formyltransferase (314 aa).

Residue 110 to 113 participates in (6S)-5,6,7,8-tetrahydrofolate binding; that stretch reads SLLP.

This sequence belongs to the Fmt family.

The catalysed reaction is L-methionyl-tRNA(fMet) + (6R)-10-formyltetrahydrofolate = N-formyl-L-methionyl-tRNA(fMet) + (6S)-5,6,7,8-tetrahydrofolate + H(+). In terms of biological role, attaches a formyl group to the free amino group of methionyl-tRNA(fMet). The formyl group appears to play a dual role in the initiator identity of N-formylmethionyl-tRNA by promoting its recognition by IF2 and preventing the misappropriation of this tRNA by the elongation apparatus. The protein is Methionyl-tRNA formyltransferase of Bacillus cereus (strain B4264).